A 732-amino-acid polypeptide reads, in one-letter code: MIRSEKEFDYIKIKLASPMRILQWSHRKLPNGQFVGEVQKSETINYRTFKPEMDGLFCERIFGPSKSLECACGKYKRVRYEGLICERCGVELTESRVRRHRMGHINLIYPVTHVWYTNSRPNYIALLLEVEQCEKRLDTGWTEFADLRDIKEKDNKDIPEYPSSEIECRNYLASPKAILNCKEFLKEKSKAKKSNIVNFYDERIKRIKLASLAYFIAEDEIAFYGLHWDLQQYRRCRELGFTGYPLKPHSKSRNRRRNTPKYLLRSTPNYLIGAVLIKRELEKLNLDQEIIKTRNFIMLCSKVLHKEQPFYNFSHWSRKWEYQRIYKLRDQSIKRIRILENLLTTGANPAWMIITILPVIPPALRPMIQLEGGRFATSDLNELYRRIITRNNRLLRLLEIDAPQLIIRNEKRMLQEAVDTLIDNGKRGKIALSASNRPLKSLSDIIKGKHGRFRQNLLGKRVDYSGRSVIVVGPSLKLNQCGLPYEMAIELFQPFIIRELINQGLASNMKVAKNLLQQNEPIINPVLEKVLANHPIFLNRAPTLHRLGIQAFQPIIVQGRAIKLHPLVCSAFNADFDGDQMAVHVPLSLEAQAECYMLMLAPYNFLSPANGEPIIMPSQDMVLGCYYLTVNNINGLLGSNHYFADLNDVILAYNQDQIEIHTSIWVRYKHKISKPSNFIKKIILNDKSYIEYYENIQIRKDENDQIIVQYLQTTTGRVLLNYIIQTTLNLKP.

Positions 70, 72, 85, and 88 each coordinate Zn(2+). Asp-575, Asp-577, and Asp-579 together coordinate Mg(2+).

This sequence belongs to the RNA polymerase beta' chain family. RpoC1 subfamily. As to quaternary structure, in plastids the minimal PEP RNA polymerase catalytic core is composed of four subunits: alpha, beta, beta', and beta''. When a (nuclear-encoded) sigma factor is associated with the core the holoenzyme is formed, which can initiate transcription. Mg(2+) serves as cofactor. It depends on Zn(2+) as a cofactor.

It is found in the plastid. The protein localises to the chloroplast. It catalyses the reaction RNA(n) + a ribonucleoside 5'-triphosphate = RNA(n+1) + diphosphate. In terms of biological role, DNA-dependent RNA polymerase catalyzes the transcription of DNA into RNA using the four ribonucleoside triphosphates as substrates. This chain is DNA-directed RNA polymerase subunit beta', found in Thalassiosira pseudonana (Marine diatom).